A 427-amino-acid chain; its full sequence is Transcobalamin-2 (427 aa).

The signal sequence occupies residues 1–18 (MRHLGALLFLLGVLGALA). 3 cysteine pairs are disulfide-bonded: Cys-21/Cys-267, Cys-116/Cys-309, and Cys-165/Cys-205. Cob(II)alamin-binding positions include Gln-104, 152 to 156 (TSYYQ), His-190, 190 to 194 (HHSVD), Asn-242, Ser-245, Gln-291, and 395 to 397 (WQL).

This sequence belongs to the eukaryotic cobalamin transport proteins family. In terms of assembly, interacts with CD320 (via LDL-receptor class A domains).

Its subcellular location is the secreted. Functionally, primary vitamin B12-binding and transport protein. Delivers cobalamin to cells. This chain is Transcobalamin-2 (TCN2), found in Pongo abelii (Sumatran orangutan).